Consider the following 212-residue polypeptide: Peptide methionine sulfoxide reductase MsrA (212 aa).

A compositionally biased stretch (polar residues) spans 1-14 (MSSIDKTQRITQSD). Positions 1-21 (MSSIDKTQRITQSDALPGRST) are disordered. Cys-52 is a catalytic residue.

This sequence belongs to the MsrA Met sulfoxide reductase family.

The catalysed reaction is L-methionyl-[protein] + [thioredoxin]-disulfide + H2O = L-methionyl-(S)-S-oxide-[protein] + [thioredoxin]-dithiol. It catalyses the reaction [thioredoxin]-disulfide + L-methionine + H2O = L-methionine (S)-S-oxide + [thioredoxin]-dithiol. Has an important function as a repair enzyme for proteins that have been inactivated by oxidation. Catalyzes the reversible oxidation-reduction of methionine sulfoxide in proteins to methionine. The chain is Peptide methionine sulfoxide reductase MsrA from Pectobacterium carotovorum subsp. carotovorum (strain PC1).